Consider the following 1058-residue polypeptide: Carbamoyl phosphate synthase large chain (1058 aa).

A carboxyphosphate synthetic domain region spans residues 1-401; that stretch reads MPKRTDIQKI…SLLKACRSLE (401 aa). ATP is bound by residues R129, R169, G175, G176, R208, I210, E215, G241, I242, H243, Q284, and E298. In terms of domain architecture, ATP-grasp 1 spans 133–327; it reads KQLMEELEQP…IAKLAAKIAV (195 aa). Mg(2+)-binding residues include Q284, E298, and N300. Residues Q284, E298, and N300 each contribute to the Mn(2+) site. An oligomerization domain region spans residues 402–546; sequence IGVHHNEIPE…YSTYGWENES (145 aa). Positions 547-929 are carbamoyl phosphate synthetic domain; it reads IRSDKESVLV…ALYKAFEASY (383 aa). One can recognise an ATP-grasp 2 domain in the interval 671–861; sequence EQALKELDIP…MAQVATKLIL (191 aa). ATP-binding residues include R707, S746, I748, E752, G777, V778, H779, S780, Q820, and E832. Positions 820, 832, and 834 each coordinate Mg(2+). Positions 820, 832, and 834 each coordinate Mn(2+). The MGS-like domain maps to 930 to 1058; that stretch reads LHLPTFGNVV…ESRSFVTEAI (129 aa). The interval 930–1058 is allosteric domain; sequence LHLPTFGNVV…ESRSFVTEAI (129 aa).

Belongs to the CarB family. As to quaternary structure, composed of two chains; the small (or glutamine) chain promotes the hydrolysis of glutamine to ammonia, which is used by the large (or ammonia) chain to synthesize carbamoyl phosphate. Tetramer of heterodimers (alpha,beta)4. It depends on Mg(2+) as a cofactor. Mn(2+) serves as cofactor.

The enzyme catalyses hydrogencarbonate + L-glutamine + 2 ATP + H2O = carbamoyl phosphate + L-glutamate + 2 ADP + phosphate + 2 H(+). It catalyses the reaction hydrogencarbonate + NH4(+) + 2 ATP = carbamoyl phosphate + 2 ADP + phosphate + 2 H(+). The protein operates within amino-acid biosynthesis; L-arginine biosynthesis; carbamoyl phosphate from bicarbonate: step 1/1. It functions in the pathway pyrimidine metabolism; UMP biosynthesis via de novo pathway; (S)-dihydroorotate from bicarbonate: step 1/3. Large subunit of the glutamine-dependent carbamoyl phosphate synthetase (CPSase). CPSase catalyzes the formation of carbamoyl phosphate from the ammonia moiety of glutamine, carbonate, and phosphate donated by ATP, constituting the first step of 2 biosynthetic pathways, one leading to arginine and/or urea and the other to pyrimidine nucleotides. The large subunit (synthetase) binds the substrates ammonia (free or transferred from glutamine from the small subunit), hydrogencarbonate and ATP and carries out an ATP-coupled ligase reaction, activating hydrogencarbonate by forming carboxy phosphate which reacts with ammonia to form carbamoyl phosphate. This chain is Carbamoyl phosphate synthase large chain, found in Streptococcus pneumoniae serotype 19F (strain G54).